Reading from the N-terminus, the 776-residue chain is ADP-ribosylation factor GTPase-activating protein AGD2 (776 aa).

In terms of domain architecture, BAR spans 2 to 226; it reads AGFINLEDSP…IHQVLTYAQQ (225 aa). The segment at 248–267 is disordered; that stretch reads QSELDSQQASAKADPSDVGG. The 132-residue stretch at 290–421 folds into the PH domain; the sequence is EVTKQGYLLK…WVNKITAAIT (132 aa). One can recognise an Arf-GAP domain in the interval 467–604; it reads DDVLTILREI…ALVVKDEREA (138 aa). The C4-type zinc finger occupies 482 to 505; the sequence is CAECNAPDPDWASLNLGVLMCIEC. 2 ANK repeats span residues 683-712 and 716-745; these read QGCSLLHVACQSGDPILLELLLQFGADINM and HGRTPLHHCIASGNNAFAKVLLRRGARPSI.

As to expression, expressed in roots, hypocotyls, cotyledons, leaf and shoot apical meristems and siliques.

Probable GTPase-activating protein. This Arabidopsis thaliana (Mouse-ear cress) protein is ADP-ribosylation factor GTPase-activating protein AGD2 (AGD2).